Consider the following 761-residue polypeptide: uncharacterized protein (761 aa).

Position 1 is an N-acetylmethionine (methionine 1). Disordered regions lie at residues 1 to 82 (MEHQ…SSSS), 229 to 320 (SNII…SALA), and 590 to 640 (FNRA…PEQQ). The span at 13-27 (NSGSNRVTVYNGTTL) shows a compositional bias: polar residues. Positions 28–45 (PTMPKSATPTSSSTTVTT) are enriched in low complexity. Composition is skewed to polar residues over residues 244–259 (TPVSNSTLKPNLSSPE), 266–276 (NTTSSSSTSDH), 590–604 (FNRASTSLPESSTDD), and 627–640 (SKNSSKKNVLPEQQ).

In terms of processing, phosphorylated by CDC28.

This is an uncharacterized protein from Saccharomyces cerevisiae (strain ATCC 204508 / S288c) (Baker's yeast).